The following is a 299-amino-acid chain: uncharacterized protein (299 aa).

This is an uncharacterized protein from Acanthamoeba polyphaga mimivirus (APMV).